The primary structure comprises 719 residues: Pesticidal crystal protein Cry1Ib (719 aa).

The protein belongs to the delta endotoxin family.

Functionally, promotes colloidosmotic lysis by binding to the midgut epithelial cells of certain coleopteran and lepidopteran species. Active on Plutella xylostella but not on Bombyx mori. The polypeptide is Pesticidal crystal protein Cry1Ib (cry1Ib) (Bacillus thuringiensis subsp. entomocidus).